Reading from the N-terminus, the 115-residue chain is NADH-ubiquinone oxidoreductase chain 3 (115 aa).

3 helical membrane passes run 3–23 (FVLA…ITFW), 55–75 (FFLV…LLPL), and 84–104 (LPLM…GLTY).

The protein belongs to the complex I subunit 3 family. In terms of assembly, core subunit of respiratory chain NADH dehydrogenase (Complex I) which is composed of 45 different subunits. Interacts with TMEM186. Interacts with TMEM242.

The protein localises to the mitochondrion inner membrane. The enzyme catalyses a ubiquinone + NADH + 5 H(+)(in) = a ubiquinol + NAD(+) + 4 H(+)(out). Functionally, core subunit of the mitochondrial membrane respiratory chain NADH dehydrogenase (Complex I) which catalyzes electron transfer from NADH through the respiratory chain, using ubiquinone as an electron acceptor. Essential for the catalytic activity of complex I. The chain is NADH-ubiquinone oxidoreductase chain 3 from Pongo abelii (Sumatran orangutan).